Here is a 110-residue protein sequence, read N- to C-terminus: UPF0367 protein Syncc9605_2376 (110 aa).

Belongs to the UPF0367 family.

The chain is UPF0367 protein Syncc9605_2376 from Synechococcus sp. (strain CC9605).